The chain runs to 113 residues: Seminal vesicle secretory protein 4 (113 aa).

The first 21 residues, M1 to G21, serve as a signal peptide directing secretion. A disordered region spans residues S31–E113. 2 stretches are compositionally biased toward low complexity: residues S38–S50 and I83–S98.

This sequence belongs to the SVP2/SVP5/SVP6 family. In terms of tissue distribution, testis.

The protein localises to the secreted. It localises to the extracellular space. This Mus musculus (Mouse) protein is Seminal vesicle secretory protein 4 (Svs4).